The sequence spans 724 residues: MTRDVTLSLAQEFGLDAAEYQRVLDIMGRTPSFTELGIFSVMWSEHCSYKSSRHWLKQLPTKAPWVIHGPGENAGVVDIGDGLAAIFKMESHNHPSFIEPYQGAATGVGGILRDVFTMGARPVANLNALRFGSPDHPATKRIIDGVVRGIGGYGNCVGVPTVGGEVNFHPSYNGNPLVNAMTVGIAPKDRIFLSAAAGVGNPVIYVGSKTGRDGIHGATMASTEFGADSEEKRPTVQVGDPFTEKLLIEACLELMATDAIIAIQDMGAAGLTSSSVEMAGKGGVGIELDLDAVPQREEGMNAYEMMLSESQERMLMILRPDRQDVARAIFEKWELDFAVIGHLTDTGHIVVKHQGVVEADIPLDPLAEQAPLYQRPTVETPKRAPLGEVADPVGIASALLTLIGSPDIASRRWIWDQYDSTVGGQTVRRPGAADAAVVRLDGTERALALTTDCTPRYCFADPEVGGAQAVAETWRNLTAVGAHPLAITDNMNFGNPQKPEIMGQFAAAIRGMREACLTLDFPVVSGNVSLYNETEGTGILPTPAIGGLGVLDNAETATGLSLRPGLDLVLIGTGGTTLGQSLWLREIAGREDGPPPAVDLAAERRHGDLVRSLIHQGKVAACHDLSDGGLLVAIAEMAIAGHTGAVLSGEGDHVFWYGEDQARYIIATTYSAAVLDAAKAANVPASLIGRAEGTDLQVPGCTPISVATLRERHEAFLPALMAQR.

H46 is an active-site residue. Residues Y49 and K88 each contribute to the ATP site. E90 is a Mg(2+) binding site. Substrate is bound by residues 91 to 94 (SHNH) and R113. The active-site Proton acceptor is the H92. D114 serves as a coordination point for Mg(2+). Q237 lines the substrate pocket. D265 contributes to the Mg(2+) binding site. Residue 309 to 311 (ESQ) coordinates substrate. ATP contacts are provided by D489 and G526. N527 provides a ligand contact to Mg(2+). S529 is a substrate binding site.

This sequence belongs to the FGAMS family. Monomer. Part of the FGAM synthase complex composed of 1 PurL, 1 PurQ and 2 PurS subunits.

The protein resides in the cytoplasm. It carries out the reaction N(2)-formyl-N(1)-(5-phospho-beta-D-ribosyl)glycinamide + L-glutamine + ATP + H2O = 2-formamido-N(1)-(5-O-phospho-beta-D-ribosyl)acetamidine + L-glutamate + ADP + phosphate + H(+). It functions in the pathway purine metabolism; IMP biosynthesis via de novo pathway; 5-amino-1-(5-phospho-D-ribosyl)imidazole from N(2)-formyl-N(1)-(5-phospho-D-ribosyl)glycinamide: step 1/2. Part of the phosphoribosylformylglycinamidine synthase complex involved in the purines biosynthetic pathway. Catalyzes the ATP-dependent conversion of formylglycinamide ribonucleotide (FGAR) and glutamine to yield formylglycinamidine ribonucleotide (FGAM) and glutamate. The FGAM synthase complex is composed of three subunits. PurQ produces an ammonia molecule by converting glutamine to glutamate. PurL transfers the ammonia molecule to FGAR to form FGAM in an ATP-dependent manner. PurS interacts with PurQ and PurL and is thought to assist in the transfer of the ammonia molecule from PurQ to PurL. This chain is Phosphoribosylformylglycinamidine synthase subunit PurL, found in Granulibacter bethesdensis (strain ATCC BAA-1260 / CGDNIH1).